The chain runs to 206 residues: Cytochrome b6-f complex iron-sulfur subunit, chloroplastic (206 aa).

A chloroplast-targeting transit peptide spans 1–29 (MAMITSRRAAAPCKAQATRRSRVMSVVRA). A helical membrane pass occupies residues 48–68 (ILLGGASLPVGSLALGYGAFF). The region spanning 92–188 (ANAWLATHQK…CDVQEDGLVT (97 aa)) is the Rieske domain. The [2Fe-2S] cluster site is built by cysteine 134, histidine 136, cysteine 152, and histidine 155. A disulfide bridge links cysteine 139 with cysteine 154.

This sequence belongs to the Rieske iron-sulfur protein family. The 4 large subunits of the cytochrome b6-f complex are cytochrome b6, subunit IV (17 kDa polypeptide, petD), cytochrome f and the Rieske protein, while the 4 small subunits are petG, petL, petM and petN. The complex functions as a dimer. Requires [2Fe-2S] cluster as cofactor.

The protein resides in the plastid. It is found in the chloroplast thylakoid membrane. The catalysed reaction is 2 oxidized [plastocyanin] + a plastoquinol + 2 H(+)(in) = 2 reduced [plastocyanin] + a plastoquinone + 4 H(+)(out). In terms of biological role, component of the cytochrome b6-f complex, which mediates electron transfer between photosystem II (PSII) and photosystem I (PSI), cyclic electron flow around PSI, and state transitions. The sequence is that of Cytochrome b6-f complex iron-sulfur subunit, chloroplastic (petC) from Volvox carteri (Green alga).